The chain runs to 228 residues: MPTPKDALQDRLGYRFRRPELLDEALTHRSVTGPDNERLEFLGDGILNFVIADELYHRRPDATEGVLSRLRATLVNGRTLAEIGKGLDVGTALRLGGGEMKSGGQRRKSILADAVEALFGAIYLDGGFDPSRETILRLYRDRLASLPTEAELKDPKTRLQEHLQAGRRPLPRYEVLEVSGQSHDQTFRVACRLQDAAVTAEGEAGSRRKAEQQAAEQMLKRLEDKHER.

The 123-residue stretch at 5-127 (KDALQDRLGY…LFGAIYLDGG (123 aa)) folds into the RNase III domain. Position 40 (Glu-40) interacts with Mg(2+). Asp-44 is an active-site residue. The Mg(2+) site is built by Asp-113 and Glu-116. The active site involves Glu-116. The 71-residue stretch at 154–224 (DPKTRLQEHL…AEQMLKRLED (71 aa)) folds into the DRBM domain. A disordered region spans residues 200–228 (AEGEAGSRRKAEQQAAEQMLKRLEDKHER). Residues 218-228 (MLKRLEDKHER) show a composition bias toward basic and acidic residues.

Belongs to the ribonuclease III family. In terms of assembly, homodimer. Mg(2+) is required as a cofactor.

The protein resides in the cytoplasm. It catalyses the reaction Endonucleolytic cleavage to 5'-phosphomonoester.. In terms of biological role, digests double-stranded RNA. Involved in the processing of primary rRNA transcript to yield the immediate precursors to the large and small rRNAs (23S and 16S). Processes some mRNAs, and tRNAs when they are encoded in the rRNA operon. Processes pre-crRNA and tracrRNA of type II CRISPR loci if present in the organism. The sequence is that of Ribonuclease 3 from Alkalilimnicola ehrlichii (strain ATCC BAA-1101 / DSM 17681 / MLHE-1).